Reading from the N-terminus, the 66-residue chain is Toxin Aah6 (66 aa).

The 64-residue stretch at 2–65 (RDGYVVKNGT…LYGDDGTYCS (64 aa)) folds into the LCN-type CS-alpha/beta domain. Residue asparagine 9 is glycosylated (N-linked (GlcNAc...) asparagine). 4 cysteine pairs are disulfide-bonded: cysteine 13–cysteine 64, cysteine 17–cysteine 40, cysteine 26–cysteine 45, and cysteine 30–cysteine 47.

The protein belongs to the long (4 C-C) scorpion toxin superfamily. Sodium channel inhibitor family. Beta subfamily. N-glycans are core-fucosylated, heterogeneous and short which could be the result of extensive trimming. Expressed by the venom gland.

It localises to the secreted. Functionally, beta toxins bind voltage-independently at site-4 of sodium channels and shift the voltage of activation toward more negative potentials thereby affecting sodium channel activation and promoting spontaneous and repetitive firing. This toxin is active only on insects. This toxin has very low anti-insect activity. The protein is Toxin Aah6 of Androctonus australis (Sahara scorpion).